The primary structure comprises 264 residues: Thymidylate synthase (264 aa).

A dUMP-binding site is contributed by Arg21. His51 lines the (6R)-5,10-methylene-5,6,7,8-tetrahydrofolate pocket. 126–127 provides a ligand contact to dUMP; the sequence is RR. The Nucleophile role is filled by Cys146. DUMP is bound by residues 166-169, Asn177, and 207-209; these read RSAD and HIY. A (6R)-5,10-methylene-5,6,7,8-tetrahydrofolate-binding site is contributed by Asp169. Ser263 is a (6R)-5,10-methylene-5,6,7,8-tetrahydrofolate binding site.

This sequence belongs to the thymidylate synthase family. Bacterial-type ThyA subfamily. In terms of assembly, homodimer.

Its subcellular location is the cytoplasm. The enzyme catalyses dUMP + (6R)-5,10-methylene-5,6,7,8-tetrahydrofolate = 7,8-dihydrofolate + dTMP. Its pathway is pyrimidine metabolism; dTTP biosynthesis. Its function is as follows. Catalyzes the reductive methylation of 2'-deoxyuridine-5'-monophosphate (dUMP) to 2'-deoxythymidine-5'-monophosphate (dTMP) while utilizing 5,10-methylenetetrahydrofolate (mTHF) as the methyl donor and reductant in the reaction, yielding dihydrofolate (DHF) as a by-product. This enzymatic reaction provides an intracellular de novo source of dTMP, an essential precursor for DNA biosynthesis. In Bacillus pumilus (strain SAFR-032), this protein is Thymidylate synthase.